The following is a 341-amino-acid chain: Glyceraldehyde-3-phosphate dehydrogenase 2 (341 aa).

Residues 13–14 (RI), aspartate 35, and arginine 85 each bind NAD(+). Residues 157-159 (SCT), threonine 188, 217-218 (TG), and arginine 240 contribute to the D-glyceraldehyde 3-phosphate site. Residue cysteine 158 is the Nucleophile of the active site. An NAD(+)-binding site is contributed by asparagine 322.

Belongs to the glyceraldehyde-3-phosphate dehydrogenase family. In terms of assembly, homotetramer.

It is found in the cytoplasm. The enzyme catalyses D-glyceraldehyde 3-phosphate + phosphate + NAD(+) = (2R)-3-phospho-glyceroyl phosphate + NADH + H(+). It functions in the pathway carbohydrate degradation; glycolysis; pyruvate from D-glyceraldehyde 3-phosphate: step 1/5. This is Glyceraldehyde-3-phosphate dehydrogenase 2 (gpd-2) from Caenorhabditis elegans.